The following is a 591-amino-acid chain: DEAD-box ATP-dependent RNA helicase 17 (591 aa).

A Q motif motif is present at residues 23-52; that stretch reads CSFTDLGLHPTLCAHLQDKMGFQAPTRIQA. The Helicase ATP-binding domain maps to 55-248; sequence IPVAMSGQHM…KISLKNPVMI (194 aa). 68 to 75 is a binding site for ATP; sequence AATGTGKT. A DEAD box motif is present at residues 181–184; the sequence is DEAD. Residues 293–482 form the Helicase C-terminal domain; it reads QLVQRYVKVS…SFPVNGQRLH (190 aa). A disordered region spans residues 562–591; it reads GRSHQVQLKKRKKEQKRERPAKRRKIPAKR. A compositionally biased stretch (basic residues) spans 568–591; that stretch reads QLKKRKKEQKRERPAKRRKIPAKR.

This sequence belongs to the DEAD box helicase family. DDX31/DBP7 subfamily. As to expression, expressed in flowers and pollen grains.

The protein resides in the nucleus. The enzyme catalyses ATP + H2O = ADP + phosphate + H(+). May play a role in organellar ribosome biogenesis and suppress 16S rRNA maturation. This Oryza sativa subsp. japonica (Rice) protein is DEAD-box ATP-dependent RNA helicase 17.